Reading from the N-terminus, the 215-residue chain is MSCTIEKALADAKALVERLRDHDDAAESLIEQTTALNKRVEAMKQYQEEIQELNEVARHRPRSTLVMGIQQENRQIRELQQENKELRTSLEEHQSALELIMSKYREQMFRLLMASKKDDPGIIMKLKEQHSKELQAHVDQITEMAAVMRKAIEIDEQQGCKEQERIFQLEQENKGLREILQITRESFLNLRKDDASESTSLSALVTNSDLSLRKN.

Coiled-coil stretches lie at residues Ile-5–Tyr-104 and Lys-161–Glu-185. Positions Asp-194–Asn-215 are disordered. Residues Glu-197–Asn-215 show a composition bias toward polar residues.

It belongs to the SIKE family.

It localises to the cytoplasm. In terms of biological role, may be involved in wound healing pathway. The polypeptide is FGFR1 oncogene partner 2 homolog (FGFR1OP2) (Pongo abelii (Sumatran orangutan)).